The chain runs to 477 residues: Bifunctional protein HldE (477 aa).

Positions 1–318 (MKVNLPAFER…ENAVRGRADT (318 aa)) are ribokinase. 195–198 (NLSE) lines the ATP pocket. Asp264 is an active-site residue. Positions 344 to 477 (MTNGVFDILH…IKKIQTESEK (134 aa)) are cytidylyltransferase.

It in the N-terminal section; belongs to the carbohydrate kinase PfkB family. In the C-terminal section; belongs to the cytidylyltransferase family. As to quaternary structure, homodimer.

It catalyses the reaction D-glycero-beta-D-manno-heptose 7-phosphate + ATP = D-glycero-beta-D-manno-heptose 1,7-bisphosphate + ADP + H(+). The catalysed reaction is D-glycero-beta-D-manno-heptose 1-phosphate + ATP + H(+) = ADP-D-glycero-beta-D-manno-heptose + diphosphate. It participates in nucleotide-sugar biosynthesis; ADP-L-glycero-beta-D-manno-heptose biosynthesis; ADP-L-glycero-beta-D-manno-heptose from D-glycero-beta-D-manno-heptose 7-phosphate: step 1/4. The protein operates within nucleotide-sugar biosynthesis; ADP-L-glycero-beta-D-manno-heptose biosynthesis; ADP-L-glycero-beta-D-manno-heptose from D-glycero-beta-D-manno-heptose 7-phosphate: step 3/4. In terms of biological role, catalyzes the phosphorylation of D-glycero-D-manno-heptose 7-phosphate at the C-1 position to selectively form D-glycero-beta-D-manno-heptose-1,7-bisphosphate. Catalyzes the ADP transfer from ATP to D-glycero-beta-D-manno-heptose 1-phosphate, yielding ADP-D-glycero-beta-D-manno-heptose. This Salmonella agona (strain SL483) protein is Bifunctional protein HldE.